A 240-amino-acid polypeptide reads, in one-letter code: Small ribosomal subunit protein uS3 (240 aa).

The KH type-2 domain maps to 39-108; it reads LRKFLKKKLY…ELILNIKEER (70 aa). The span at 213–224 shows a compositional bias: basic and acidic residues; it reads MNSDDTATPERK. Residues 213–240 are disordered; that stretch reads MNSDDTATPERKAPRRRKGRRNVNAKKN. The segment covering 225 to 240 has biased composition (basic residues); the sequence is APRRRKGRRNVNAKKN.

This sequence belongs to the universal ribosomal protein uS3 family. As to quaternary structure, part of the 30S ribosomal subunit. Forms a tight complex with proteins S10 and S14.

In terms of biological role, binds the lower part of the 30S subunit head. Binds mRNA in the 70S ribosome, positioning it for translation. This is Small ribosomal subunit protein uS3 from Nautilia profundicola (strain ATCC BAA-1463 / DSM 18972 / AmH).